Reading from the N-terminus, the 290-residue chain is Sodium/potassium-transporting ATPase subunit beta-2 (290 aa).

Over 1-39 the chain is Cytoplasmic; the sequence is MVIQKEKKSCGQVVEEWKEFVWNPRTHQFMGRTGTSWAF. A helical; Signal-anchor for type II membrane protein transmembrane segment spans residues 40-67; it reads ILLFYLVFYGFLTAMFTLTMWVMLQTVS. The Extracellular portion of the chain corresponds to 68–290; it reads DHTPKYQDRL…VAFKLRINKT (223 aa). N-linked (GlcNAc...) asparagine glycans are attached at residues asparagine 96 and asparagine 118. A disulfide bridge links cysteine 129 with cysteine 150. N-linked (GlcNAc...) asparagine glycosylation is found at asparagine 153 and asparagine 159. The cysteines at positions 160 and 177 are disulfide-linked. Asparagine 193, asparagine 197, and asparagine 238 each carry an N-linked (GlcNAc...) asparagine glycan. The tract at residues 193 to 290 is immunoglobulin-like; it reads NQSMNVTCAG…VAFKLRINKT (98 aa). An intrachain disulfide couples cysteine 200 to cysteine 261.

This sequence belongs to the X(+)/potassium ATPases subunit beta family. The sodium/potassium-transporting ATPase is composed of a catalytic alpha subunit, an auxiliary non-catalytic beta subunit and an additional regulatory subunit. Interacts with isoform 2 of BSG.

Its subcellular location is the cell membrane. Its function is as follows. This is the non-catalytic component of the active enzyme, which catalyzes the hydrolysis of ATP coupled with the exchange of Na(+) and K(+) ions across the plasma membrane. The exact function of the beta-2 subunit is not known. Functionally, mediates cell adhesion of neurons and astrocytes, and promotes neurite outgrowth. This is Sodium/potassium-transporting ATPase subunit beta-2 (ATP1B2) from Homo sapiens (Human).